A 61-amino-acid polypeptide reads, in one-letter code: Small ribosomal subunit protein uS14 (61 aa).

Positions 24, 27, 40, and 43 each coordinate Zn(2+).

The protein belongs to the universal ribosomal protein uS14 family. Zinc-binding uS14 subfamily. In terms of assembly, part of the 30S ribosomal subunit. Contacts proteins S3 and S10. It depends on Zn(2+) as a cofactor.

Its function is as follows. Binds 16S rRNA, required for the assembly of 30S particles and may also be responsible for determining the conformation of the 16S rRNA at the A site. In Roseiflexus sp. (strain RS-1), this protein is Small ribosomal subunit protein uS14.